We begin with the raw amino-acid sequence, 46 residues long: Myoregulin (46 aa).

Topologically, residues methionine 1–isoleucine 21 are cytoplasmic. A helical transmembrane segment spans residues leucine 22–valine 42. Over valine 43–serine 46 the chain is Lumenal.

In terms of assembly, homooligomer. Monomer. Interacts with ATP2A1/SERCA1. Interacts as a monomer with ATP2A2/SERCA2; the interaction inhibits ATP2A2 activity. In terms of tissue distribution, specifically expressed in all skeletal muscles. Detected in both fast- and slow-type skeletal muscle. Not expressed in cardiac or smooth muscles.

The protein resides in the sarcoplasmic reticulum membrane. Its function is as follows. Inhibits the activity of ATP2A1/SERCA1 ATPase in sarcoplasmic reticulum by decreasing the apparent affinity of the ATPase for Ca(2+), thereby acting as a key regulator of skeletal muscle activity. Its high expression in adult skeletal muscle, suggests that it constitutes the predominant regulator of ATP2A1/SERCA1 in adult skeletal muscle. Also inhibits the activity of ATP2A2/SERCA2 and ATP2A3/SERCA3. The protein is Myoregulin of Mus musculus (Mouse).